The following is a 192-amino-acid chain: Imidazoleglycerol-phosphate dehydratase (192 aa).

It belongs to the imidazoleglycerol-phosphate dehydratase family.

Its subcellular location is the cytoplasm. It catalyses the reaction D-erythro-1-(imidazol-4-yl)glycerol 3-phosphate = 3-(imidazol-4-yl)-2-oxopropyl phosphate + H2O. It functions in the pathway amino-acid biosynthesis; L-histidine biosynthesis; L-histidine from 5-phospho-alpha-D-ribose 1-diphosphate: step 6/9. The sequence is that of Imidazoleglycerol-phosphate dehydratase from Caldivirga maquilingensis (strain ATCC 700844 / DSM 13496 / JCM 10307 / IC-167).